Reading from the N-terminus, the 735-residue chain is Polycomb protein sop-2 (735 aa).

Residues 1 to 15 are compositionally biased toward polar residues; that stretch reads MSSNLTSNEMSSTSA. 3 disordered regions span residues 1–59, 223–288, and 300–534; these read MSSN…SSSS, AARS…APAA, and PQES…PVLQ. The interval 224–503 is RNA-binding; it reads ARSSRMAARR…APATPATPAS (280 aa). A compositionally biased stretch (low complexity) spans 239–288; that stretch reads YRGAFRGAARGAPSRRPAPAAEVAPETPVAAPMAPAAPAAPATPEAAPAA. 2 stretches are compositionally biased toward basic and acidic residues: residues 317–355 and 389–398; these read DTSK…DGGR and RAAEKKKPED. Residues 399-413 show a composition bias toward acidic residues; the sequence is SDAAEEQEVEMEVDN. Residues 450-470 are compositionally biased toward basic and acidic residues; it reads VEPKKEPVDEPAEKIPKRSEA. A compositionally biased stretch (low complexity) spans 471-504; the sequence is APEVPATATTKEAPPSTSSSPPDAPATPATPASS. Residues 520-534 are compositionally biased toward polar residues; the sequence is LTGSPPESETPPVLQ. The SAM-like stretch occupies residues 621–712; sequence LVENNHEATL…YGTEVLNHYR (92 aa).

In terms of assembly, homodimer. Interacts with ubc-9. Binds through its N-terminal region to the N-terminal region of sor-1. Post-translationally, sumoylated by ubc-9. Sumoylation is required for the transcriptional regulation of homeotic genes. In terms of tissue distribution, widely expressed. Weakly expressed in most somatic cells of 50-cell stage embryos. At 200 cell stage, it is strongly expressed. By comma stage, it is expressed in most somatic cells.

The protein localises to the nucleus. Polycomb group (PcG) protein. PcG proteins act by forming multiprotein complexes, which are required to maintain the transcriptionally repressive state of homeotic genes throughout development. PcG proteins are not required to initiate repression, but to maintain it during later stages of development. Also required to repress expression of other genes and for localization of sor-1. Binds RNA. This is Polycomb protein sop-2 (sop-2) from Caenorhabditis elegans.